A 645-amino-acid polypeptide reads, in one-letter code: 1,4-alpha-glucan branching enzyme GlgB (645 aa).

Residue D309 is the Nucleophile of the active site. The active-site Proton donor is E352. Residues 621–645 (MRKGSKKQDGKKAELRSNATSRRKR) form a disordered region. Basic and acidic residues predominate over residues 626 to 635 (KKQDGKKAEL).

It belongs to the glycosyl hydrolase 13 family. GlgB subfamily. In terms of assembly, monomer.

The catalysed reaction is Transfers a segment of a (1-&gt;4)-alpha-D-glucan chain to a primary hydroxy group in a similar glucan chain.. The protein operates within glycan biosynthesis; glycogen biosynthesis. In terms of biological role, catalyzes the formation of the alpha-1,6-glucosidic linkages in glycogen by scission of a 1,4-alpha-linked oligosaccharide from growing alpha-1,4-glucan chains and the subsequent attachment of the oligosaccharide to the alpha-1,6 position. The chain is 1,4-alpha-glucan branching enzyme GlgB from Bacillus cytotoxicus (strain DSM 22905 / CIP 110041 / 391-98 / NVH 391-98).